Here is a 638-residue protein sequence, read N- to C-terminus: ATP-dependent zinc metalloprotease FtsH (638 aa).

Residues 1 to 15 are Cytoplasmic-facing; it reads MDNNHKGPNDPNSKK. A helical transmembrane segment spans residues 16 to 36; it reads PLLQNPLLLIAIFGIIIFVAM. At 37–122 the chain is on the periplasmic side; that stretch reads RVMNSDEGFG…INYSGFSESN (86 aa). Residues 123-143 form a helical membrane-spanning segment; the sequence is FFADILGWLLPVLVILGLWMF. The Cytoplasmic portion of the chain corresponds to 144 to 638; it reads MASRMQKNMG…RLVPLEEHAS (495 aa). 216 to 223 serves as a coordination point for ATP; sequence GPPGTGKT. His440 is a Zn(2+) binding site. The active site involves Glu441. His444 and Asp517 together coordinate Zn(2+).

It in the central section; belongs to the AAA ATPase family. The protein in the C-terminal section; belongs to the peptidase M41 family. Homohexamer. Zn(2+) is required as a cofactor.

It localises to the cell inner membrane. Its function is as follows. Acts as a processive, ATP-dependent zinc metallopeptidase for both cytoplasmic and membrane proteins. Plays a role in the quality control of integral membrane proteins. This is ATP-dependent zinc metalloprotease FtsH from Helicobacter felis (strain ATCC 49179 / CCUG 28539 / NCTC 12436 / CS1).